The sequence spans 220 residues: Protein-L-isoaspartate O-methyltransferase (220 aa).

The active site involves Ser-69.

This sequence belongs to the methyltransferase superfamily. L-isoaspartyl/D-aspartyl protein methyltransferase family.

The protein resides in the cytoplasm. It catalyses the reaction [protein]-L-isoaspartate + S-adenosyl-L-methionine = [protein]-L-isoaspartate alpha-methyl ester + S-adenosyl-L-homocysteine. In terms of biological role, catalyzes the methyl esterification of L-isoaspartyl residues in peptides and proteins that result from spontaneous decomposition of normal L-aspartyl and L-asparaginyl residues. It plays a role in the repair and/or degradation of damaged proteins. This Alcanivorax borkumensis (strain ATCC 700651 / DSM 11573 / NCIMB 13689 / SK2) protein is Protein-L-isoaspartate O-methyltransferase.